The chain runs to 337 residues: Glyceraldehyde-3-phosphate dehydrogenase (337 aa).

Residues 12–13 (RI), Asp-34, Arg-78, and Thr-121 contribute to the NAD(+) site. Residues 151-153 (SCT), Thr-182, Arg-199, 212-213 (SG), and Arg-235 each bind D-glyceraldehyde 3-phosphate. Cys-152 functions as the Nucleophile in the catalytic mechanism. Asn-317 lines the NAD(+) pocket.

This sequence belongs to the glyceraldehyde-3-phosphate dehydrogenase family. In terms of assembly, homotetramer.

It localises to the cytoplasm. The catalysed reaction is D-glyceraldehyde 3-phosphate + phosphate + NAD(+) = (2R)-3-phospho-glyceroyl phosphate + NADH + H(+). The protein operates within carbohydrate degradation; glycolysis; pyruvate from D-glyceraldehyde 3-phosphate: step 1/5. Functionally, catalyzes the oxidative phosphorylation of glyceraldehyde 3-phosphate (G3P) to 1,3-bisphosphoglycerate (BPG) using the cofactor NAD. The first reaction step involves the formation of a hemiacetal intermediate between G3P and a cysteine residue, and this hemiacetal intermediate is then oxidized to a thioester, with concomitant reduction of NAD to NADH. The reduced NADH is then exchanged with the second NAD, and the thioester is attacked by a nucleophilic inorganic phosphate to produce BPG. This is Glyceraldehyde-3-phosphate dehydrogenase (gap) from Lactococcus lactis subsp. lactis (strain IL1403) (Streptococcus lactis).